Here is a 400-residue protein sequence, read N- to C-terminus: MTTFGTPLSPSATRVLLLGSGELGKEVAIELQRFGVEVIAADRYANAPAMQVAHRSHVLDMLDPAALRALIASEQPHLIVPEIEAIHTETLVALEREQGQKVIPTARAARLTMDREGIRRLAAETLCLPTSPYRFVDTVEEYRNAIAAVGVPCVVKPVMSSSGKGQSTLRSEADIDAAWAYAQTGGRAGAGRCIVEGFIDFDYEITLLTVRHAGGTSYCDPIGHWQQDGDYRESWQPQPMSAAALRRSQEIAKAITDELGGWGLFGVELFVKGDEVWFSEVSPRPHDTGLVTLVSQDLSEFALHARAILGLPVGAQDGGVIRQAGPSASCALLAHGNGVPVFDNVAEALRDPDTALRLFGKPRVDGHRRVGVTLARADSIDAAREKARVAAAALTIQLQA.

Residues 22–23 (EL) and Glu-82 each bind N(1)-(5-phospho-beta-D-ribosyl)glycinamide. ATP is bound by residues Arg-115, Lys-156, 161–166 (SSGKGQ), 196–199 (EGFI), and Glu-204. The ATP-grasp domain occupies 120–309 (RLAAETLCLP…EFALHARAIL (190 aa)). Mg(2+) contacts are provided by Glu-268 and Glu-280. N(1)-(5-phospho-beta-D-ribosyl)glycinamide-binding positions include Asp-287, Lys-361, and 368 to 369 (RR).

The protein belongs to the PurK/PurT family. Homodimer.

It carries out the reaction N(1)-(5-phospho-beta-D-ribosyl)glycinamide + formate + ATP = N(2)-formyl-N(1)-(5-phospho-beta-D-ribosyl)glycinamide + ADP + phosphate + H(+). Its pathway is purine metabolism; IMP biosynthesis via de novo pathway; N(2)-formyl-N(1)-(5-phospho-D-ribosyl)glycinamide from N(1)-(5-phospho-D-ribosyl)glycinamide (formate route): step 1/1. In terms of biological role, involved in the de novo purine biosynthesis. Catalyzes the transfer of formate to 5-phospho-ribosyl-glycinamide (GAR), producing 5-phospho-ribosyl-N-formylglycinamide (FGAR). Formate is provided by PurU via hydrolysis of 10-formyl-tetrahydrofolate. In Xanthomonas euvesicatoria pv. vesicatoria (strain 85-10) (Xanthomonas campestris pv. vesicatoria), this protein is Formate-dependent phosphoribosylglycinamide formyltransferase.